Reading from the N-terminus, the 359-residue chain is Alpha-2-HS-glycoprotein (359 aa).

The first 18 residues, 1–18, serve as a signal peptide directing secretion; it reads MKSFVLLFCLAQLWGCHS. A Cystatin fetuin-A-type 1 domain is found at 27-133; the sequence is YKEPACDDPD…QFSVLFTKCD (107 aa). 6 disulfides stabilise this stretch: cysteine 32–cysteine 350, cysteine 89–cysteine 100, cysteine 114–cysteine 132, cysteine 146–cysteine 149, cysteine 208–cysteine 219, and cysteine 230–cysteine 248. N-linked (GlcNAc...) asparagine glycosylation is present at asparagine 99. A phosphoserine mark is found at serine 134, serine 135, and serine 138. Residues 144–256 enclose the Cystatin fetuin-A-type 2 domain; it reads KLCPDCPLLA…TCTLFQTQPV (113 aa). 2 N-linked (GlcNAc...) asparagine glycosylation sites follow: asparagine 156 and asparagine 176. Residues 257 to 285 are disordered; the sequence is IPQPQPDGAEAEAPSAVPDAAGPTPSAAG. Serine 271 carries an O-linked (GalNAc...) serine glycan. A compositionally biased stretch (low complexity) spans 276–285; the sequence is AAGPTPSAAG. Threonine 280 carries an O-linked (GalNAc...) threonine glycan. Serine 282 and serine 296 each carry an O-linked (GalNAc...) serine glycan. Phosphothreonine is present on threonine 314. Residues serine 316, serine 320, serine 323, and serine 325 each carry the phosphoserine modification. Threonine 334 is a glycosylation site (O-linked (GalNAc...) threonine). An O-linked (GalNAc...) serine; partial glycan is attached at serine 341.

This sequence belongs to the fetuin family. In terms of processing, phosphorylated by FAM20C in the extracellular medium. Liver and bone.

The protein resides in the secreted. Functionally, promotes endocytosis, possesses opsonic properties and influences the mineral phase of bone. Suggested to have lymphocyte stimulating properties, lipid binding capability and to bind thyroid hormone. The protein is Alpha-2-HS-glycoprotein (AHSG) of Bos taurus (Bovine).